A 392-amino-acid polypeptide reads, in one-letter code: MSVINLSDLDLNSKRVLIRQDLNVPISNGVVTSDKRIKASLPTIKMALNQGAKVMLMSHRGRPIEGDPSDGFSLQPVADRLSELLNTTVRLEKDWLDGVEMNNGKVVLCENVRFNVGEMVNDDELSKRMAAICDIFVMDAFGTAHRAQASTYGVAKYAPIACSGPLLSEELDALGKALDNPKRPMVAIVGGSKVSTKLTVLESLSKIVDQLVVGGGIANTFIAAQGFNVGKSLCEYDLIPIAKKLMEDCEIPVSKDVVCGKEFSDVAEAETKASKDVADDDMIFDIGPKSAQQLADIMRNAGTIVWNGPVGVFEFDQFAGGTETLGKAIAESNAFSIAGGGDTLAAVDKYGIEDKISYISTGGGAFLEFLEGKKLPAVEVLEQRALEVIKLA.

Substrate is bound by residues 21–23 (DLN), Arg36, 59–62 (HRGR), Arg113, and Arg146. Residues Lys197, Glu314, and 340-343 (GGDT) contribute to the ATP site.

It belongs to the phosphoglycerate kinase family. As to quaternary structure, monomer.

The protein localises to the cytoplasm. It catalyses the reaction (2R)-3-phosphoglycerate + ATP = (2R)-3-phospho-glyceroyl phosphate + ADP. It functions in the pathway carbohydrate degradation; glycolysis; pyruvate from D-glyceraldehyde 3-phosphate: step 2/5. The sequence is that of Phosphoglycerate kinase from Vesicomyosocius okutanii subsp. Calyptogena okutanii (strain HA).